We begin with the raw amino-acid sequence, 757 residues long: Probable inorganic carbon transporter subunit DabA (757 aa).

C321, D323, H475, and C490 together coordinate Zn(2+).

Belongs to the inorganic carbon transporter (TC 9.A.2) DabA family. In terms of assembly, forms a complex with DabB. The cofactor is Zn(2+).

It is found in the cell inner membrane. Functionally, part of an energy-coupled inorganic carbon pump. The chain is Probable inorganic carbon transporter subunit DabA from Idiomarina loihiensis (strain ATCC BAA-735 / DSM 15497 / L2-TR).